The chain runs to 55 residues: MAKPTTIKIRLNSTAGTGHFYVTKKNARTMTEKMTIRKYDPVARKHVEYKEGKIK.

This sequence belongs to the bacterial ribosomal protein bL33 family.

In Ruegeria sp. (strain TM1040) (Silicibacter sp.), this protein is Large ribosomal subunit protein bL33.